We begin with the raw amino-acid sequence, 378 residues long: Protein-glutamate methylesterase/protein-glutamine glutaminase 2 (378 aa).

One can recognise a Response regulatory domain in the interval 4-121 (KVLVVDDSGF…SRNPEKVKQL (118 aa)). Asp-55 carries the 4-aspartylphosphate modification. The tract at residues 141 to 188 (APAPAAAPTPAPIPAAAPSSFGSHSAPARPAPAPAPTRAPAASASSPA) is disordered. Pro residues predominate over residues 145-155 (AAAPTPAPIPA). 2 stretches are compositionally biased toward low complexity: residues 156–168 (AAPS…SAPA) and 178–188 (RAPAASASSPA). Residues 187-378 (PAPKRKNYKL…IGKHIVEACV (192 aa)) form the CheB-type methylesterase domain. Active-site residues include Ser-202, His-229, and Asp-322.

It belongs to the CheB family. In terms of processing, phosphorylated by CheA. Phosphorylation of the N-terminal regulatory domain activates the methylesterase activity.

It is found in the cytoplasm. The catalysed reaction is [protein]-L-glutamate 5-O-methyl ester + H2O = L-glutamyl-[protein] + methanol + H(+). It catalyses the reaction L-glutaminyl-[protein] + H2O = L-glutamyl-[protein] + NH4(+). Its function is as follows. Involved in chemotaxis. Part of a chemotaxis signal transduction system that modulates chemotaxis in response to various stimuli. Catalyzes the demethylation of specific methylglutamate residues introduced into the chemoreceptors (methyl-accepting chemotaxis proteins or MCP) by CheR. Also mediates the irreversible deamidation of specific glutamine residues to glutamic acid. The chain is Protein-glutamate methylesterase/protein-glutamine glutaminase 2 from Pseudomonas fluorescens (strain Pf0-1).